A 269-amino-acid chain; its full sequence is Formamidopyrimidine-DNA glycosylase (269 aa).

Pro-2 (schiff-base intermediate with DNA) is an active-site residue. The Proton donor role is filled by Glu-3. The active-site Proton donor; for beta-elimination activity is the Lys-57. Positions 90, 109, and 150 each coordinate DNA. The FPG-type zinc finger occupies 235-269; that stretch reads QVYGRKGEPCRVCGTPIVATKHAQRATFYCRQCQK. Residue Arg-259 is the Proton donor; for delta-elimination activity of the active site.

It belongs to the FPG family. As to quaternary structure, monomer. The cofactor is Zn(2+).

It carries out the reaction Hydrolysis of DNA containing ring-opened 7-methylguanine residues, releasing 2,6-diamino-4-hydroxy-5-(N-methyl)formamidopyrimidine.. The catalysed reaction is 2'-deoxyribonucleotide-(2'-deoxyribose 5'-phosphate)-2'-deoxyribonucleotide-DNA = a 3'-end 2'-deoxyribonucleotide-(2,3-dehydro-2,3-deoxyribose 5'-phosphate)-DNA + a 5'-end 5'-phospho-2'-deoxyribonucleoside-DNA + H(+). Functionally, involved in base excision repair of DNA damaged by oxidation or by mutagenic agents. Acts as a DNA glycosylase that recognizes and removes damaged bases. Has a preference for oxidized purines, such as 7,8-dihydro-8-oxoguanine (8-oxoG). Has AP (apurinic/apyrimidinic) lyase activity and introduces nicks in the DNA strand. Cleaves the DNA backbone by beta-delta elimination to generate a single-strand break at the site of the removed base with both 3'- and 5'-phosphates. In Escherichia coli (strain 55989 / EAEC), this protein is Formamidopyrimidine-DNA glycosylase.